The following is a 257-amino-acid chain: Type III pantothenate kinase (257 aa).

6-13 (DSGNTNTV) serves as a coordination point for ATP. Residue 108–111 (GADR) coordinates substrate. Asp110 functions as the Proton acceptor in the catalytic mechanism. Asp130 contributes to the K(+) binding site. Thr133 serves as a coordination point for ATP. Thr185 serves as a coordination point for substrate.

This sequence belongs to the type III pantothenate kinase family. As to quaternary structure, homodimer. It depends on NH4(+) as a cofactor. Requires K(+) as cofactor.

The protein resides in the cytoplasm. It carries out the reaction (R)-pantothenate + ATP = (R)-4'-phosphopantothenate + ADP + H(+). It participates in cofactor biosynthesis; coenzyme A biosynthesis; CoA from (R)-pantothenate: step 1/5. Catalyzes the phosphorylation of pantothenate (Pan), the first step in CoA biosynthesis. This Rhodospirillum rubrum (strain ATCC 11170 / ATH 1.1.1 / DSM 467 / LMG 4362 / NCIMB 8255 / S1) protein is Type III pantothenate kinase.